We begin with the raw amino-acid sequence, 133 residues long: Small ribosomal subunit protein uS8 (133 aa).

It belongs to the universal ribosomal protein uS8 family. As to quaternary structure, part of the 30S ribosomal subunit. Contacts proteins S5 and S12.

One of the primary rRNA binding proteins, it binds directly to 16S rRNA central domain where it helps coordinate assembly of the platform of the 30S subunit. This chain is Small ribosomal subunit protein uS8, found in Prochlorococcus marinus (strain SARG / CCMP1375 / SS120).